We begin with the raw amino-acid sequence, 132 residues long: Holo-[acyl-carrier-protein] synthase (132 aa).

Positions 8 and 62 each coordinate Mg(2+).

It belongs to the P-Pant transferase superfamily. AcpS family. It depends on Mg(2+) as a cofactor.

The protein resides in the cytoplasm. It carries out the reaction apo-[ACP] + CoA = holo-[ACP] + adenosine 3',5'-bisphosphate + H(+). Transfers the 4'-phosphopantetheine moiety from coenzyme A to a Ser of acyl-carrier-protein. This Polaromonas sp. (strain JS666 / ATCC BAA-500) protein is Holo-[acyl-carrier-protein] synthase.